Here is a 155-residue protein sequence, read N- to C-terminus: S-ribosylhomocysteine lyase (155 aa).

Positions 57, 61, and 124 each coordinate Fe cation.

This sequence belongs to the LuxS family. Homodimer. Fe cation is required as a cofactor.

It carries out the reaction S-(5-deoxy-D-ribos-5-yl)-L-homocysteine = (S)-4,5-dihydroxypentane-2,3-dione + L-homocysteine. Its function is as follows. Involved in the synthesis of autoinducer 2 (AI-2) which is secreted by bacteria and is used to communicate both the cell density and the metabolic potential of the environment. The regulation of gene expression in response to changes in cell density is called quorum sensing. Catalyzes the transformation of S-ribosylhomocysteine (RHC) to homocysteine (HC) and 4,5-dihydroxy-2,3-pentadione (DPD). This Listeria monocytogenes serovar 1/2a (strain ATCC BAA-679 / EGD-e) protein is S-ribosylhomocysteine lyase.